We begin with the raw amino-acid sequence, 531 residues long: Transactivator/viroplasmin protein (531 aa).

Disordered stretches follow at residues 80–101 (ASGKKPIAEGVSATSPEQTATG) and 505–531 (CKSESSGPQTSEEGLQESEDEDFSVLV). 2 stretches are compositionally biased toward polar residues: residues 91–100 (SATSPEQTAT) and 505–517 (CKSESSGPQTSEE). The span at 518-531 (GLQESEDEDFSVLV) shows a compositional bias: acidic residues.

Belongs to the caulimoviridae viroplasmin family.

Its subcellular location is the host cytoplasm. In terms of biological role, enhances the translation of downstream ORFs on polycistronic mRNAs. The sequence is that of Transactivator/viroplasmin protein from Cestrum yellow leaf curling virus (CmYLCV).